Reading from the N-terminus, the 455-residue chain is Chitin deacetylase 2 (455 aa).

Positions 1 to 19 (MIPSTAAALLTLTAGAAFA) are cleaved as a signal peptide. N86, N98, N122, and N142 each carry an N-linked (GlcNAc...) asparagine glycan. The NodB homology domain occupies 157 to 347 (MTWGLGFDDG…IKSAFNYIVP (191 aa)). D164 acts as the Proton acceptor in catalysis. D164 contributes to the acetate binding site. A Co(2+)-binding site is contributed by D165. The N-linked (GlcNAc...) asparagine glycan is linked to N168. Co(2+) is bound by residues H214 and H218. Acetate is bound at residue Y255. N-linked (GlcNAc...) asparagine glycosylation is found at N270 and N308. Catalysis depends on H321, which acts as the Proton donor. N325, N353, N362, and N377 each carry an N-linked (GlcNAc...) asparagine glycan. The tract at residues 381-423 (STTQKDGSSSTNTASGSGAAGSASATSSSDDSSSSGGSSGSSG) is disordered. The N-linked (GlcNAc...) asparagine glycan is linked to N426. A lipid anchor (GPI-anchor amidated serine) is attached at S429. A propeptide spans 430 to 455 (GALGMFDSLSGVGLILGGVVAGVMLL) (removed in mature form).

It belongs to the polysaccharide deacetylase family. The cofactor is Co(2+). Post-translationally, the GPI anchor is required for the attachment to the cell membrane but not for cell surface targeting.

The protein localises to the secreted. The protein resides in the cell wall. It is found in the cell membrane. The catalysed reaction is [(1-&gt;4)-N-acetyl-beta-D-glucosaminyl](n) + n H2O = chitosan + n acetate. Its function is as follows. Hydrolyzes the N-acetamido groups of N-acetyl-D-glucosamine residues in chitin to form chitosan and acetate. Chitosan is required to anchor melanin to the cell wall, for maintenance of cell wall integrity, and for proper cytokinesis. Chitosan offers an advantage during infection as it is less readily detected than chitin by host immunosurveillance mechanisms. This Cryptococcus neoformans var. grubii serotype A (strain H99 / ATCC 208821 / CBS 10515 / FGSC 9487) (Filobasidiella neoformans var. grubii) protein is Chitin deacetylase 2.